We begin with the raw amino-acid sequence, 563 residues long: Tripeptidyl-peptidase 1 (563 aa).

The N-terminal stretch at 1-19 (MGPRSGLLGLFALFVAGKC) is a signal peptide. Residues 20–195 (SYSPEPDQQR…PEPQVPGTVG (176 aa)) constitute a propeptide, removed in mature form. Cys-111 and Cys-122 are disulfide-bonded. The 365-residue stretch at 199–563 (GVTPSVIRKR…PALLKTLMNP (365 aa)) folds into the Peptidase S53 domain. N-linked (GlcNAc...) asparagine glycosylation is found at Asn-210 and Asn-222. Residues Glu-272 and Asp-276 each act as charge relay system in the active site. N-linked (GlcNAc...) asparagine glycans are attached at residues Asn-286, Asn-313, and Asn-443. Disulfide bonds link Cys-365/Cys-526 and Cys-522/Cys-537. The active-site Charge relay system is Ser-475. Ca(2+)-binding residues include Asp-517 and Val-518. Ca(2+) contacts are provided by Gly-539, Gly-541, and Asp-543.

Monomer. Interacts with CLN5. Interacts with CLN3. Requires Ca(2+) as cofactor. Activated by autocatalytic proteolytical processing upon acidification. N-glycosylation is required for processing and activity.

The protein localises to the lysosome. It localises to the melanosome. It carries out the reaction Release of an N-terminal tripeptide from a polypeptide, but also has endopeptidase activity.. Functionally, lysosomal serine protease with tripeptidyl-peptidase I activity. May act as a non-specific lysosomal peptidase which generates tripeptides from the breakdown products produced by lysosomal proteinases. Requires substrates with an unsubstituted N-terminus. The polypeptide is Tripeptidyl-peptidase 1 (TPP1) (Bos taurus (Bovine)).